We begin with the raw amino-acid sequence, 475 residues long: Bifunctional protein HldE (475 aa).

A ribokinase region spans residues 1–321 (MADKIDISLY…RALHQITASH (321 aa)). Position 197–200 (197–200 (NLKE)) interacts with ATP. The active site involves Asp-266. Residues 346–475 (MTNGCFDILH…TSRLVEKMLN (130 aa)) are cytidylyltransferase.

It in the N-terminal section; belongs to the carbohydrate kinase PfkB family. The protein in the C-terminal section; belongs to the cytidylyltransferase family. Homodimer.

The catalysed reaction is D-glycero-beta-D-manno-heptose 7-phosphate + ATP = D-glycero-beta-D-manno-heptose 1,7-bisphosphate + ADP + H(+). It catalyses the reaction D-glycero-beta-D-manno-heptose 1-phosphate + ATP + H(+) = ADP-D-glycero-beta-D-manno-heptose + diphosphate. The protein operates within nucleotide-sugar biosynthesis; ADP-L-glycero-beta-D-manno-heptose biosynthesis; ADP-L-glycero-beta-D-manno-heptose from D-glycero-beta-D-manno-heptose 7-phosphate: step 1/4. It participates in nucleotide-sugar biosynthesis; ADP-L-glycero-beta-D-manno-heptose biosynthesis; ADP-L-glycero-beta-D-manno-heptose from D-glycero-beta-D-manno-heptose 7-phosphate: step 3/4. Its function is as follows. Catalyzes the phosphorylation of D-glycero-D-manno-heptose 7-phosphate at the C-1 position to selectively form D-glycero-beta-D-manno-heptose-1,7-bisphosphate. Functionally, catalyzes the ADP transfer from ATP to D-glycero-beta-D-manno-heptose 1-phosphate, yielding ADP-D-glycero-beta-D-manno-heptose. The polypeptide is Bifunctional protein HldE (Coxiella burnetii (strain RSA 331 / Henzerling II)).